The following is a 316-amino-acid chain: Olfactory receptor 2K2 (316 aa).

The Extracellular portion of the chain corresponds to 1 to 20; sequence MQGENFTIWSIFFLEGFSQY. N-linked (GlcNAc...) asparagine glycosylation is present at Asn5. The helical transmembrane segment at 21–41 threads the bilayer; it reads PGLEVVLFVFSLVMYLTTLLG. Topologically, residues 42–65 are cytoplasmic; sequence NSTLILITILDSRLKTPMYLFLGN. Residues 66 to 86 form a helical membrane-spanning segment; the sequence is LSFMDICYTSASVPTLLVNLL. Residues 87–97 are Extracellular-facing; sequence SSQKTIIFSGC. The cysteines at positions 97 and 188 are disulfide-linked. A helical transmembrane segment spans residues 98-118; sequence AVQMYLSLAMGSTECVLLAVM. The Cytoplasmic portion of the chain corresponds to 119-143; the sequence is AYDRYVAICNPLRYSIIMNRCVCAR. A helical transmembrane segment spans residues 144–164; the sequence is MATVSWVTGCLTALLETSFAL. The Extracellular portion of the chain corresponds to 165-199; that stretch reads QIPLCGNLIDHFTCEILAVLKLACTSSLLMNTIML. The chain crosses the membrane as a helical span at residues 200 to 220; sequence VVSILLLPIPMLLVCISYIFI. At 221–238 the chain is on the cytoplasmic side; that stretch reads LSTILRITSAEGRNKAFS. Residues 239-259 form a helical membrane-spanning segment; sequence TCGAHLTVVILYYGAALSMYL. Topologically, residues 260–270 are extracellular; the sequence is KPSSSNAQKID. The chain crosses the membrane as a helical span at residues 271 to 291; that stretch reads KIISLLYGVLTPMLNPIIYSL. At 292-316 the chain is on the cytoplasmic side; sequence RNKEVKDAMKKLLGKITLHQTHEHL.

Belongs to the G-protein coupled receptor 1 family.

The protein resides in the cell membrane. Functionally, odorant receptor. The sequence is that of Olfactory receptor 2K2 (OR2K2) from Homo sapiens (Human).